Here is a 295-residue protein sequence, read N- to C-terminus: Nitrogenase iron protein (295 aa).

10 to 17 (GKGGIGKS) is an ATP binding site. Cysteine 98 contributes to the [4Fe-4S] cluster binding site. Position 101 is an ADP-ribosylarginine; by dinitrogenase reductase ADP-ribosyltransferase (arginine 101). [4Fe-4S] cluster is bound at residue cysteine 133.

Belongs to the NifH/BchL/ChlL family. In terms of assembly, homodimer. [4Fe-4S] cluster is required as a cofactor. The reversible ADP-ribosylation of Arg-101 inactivates the nitrogenase reductase and regulates nitrogenase activity.

The catalysed reaction is N2 + 8 reduced [2Fe-2S]-[ferredoxin] + 16 ATP + 16 H2O = H2 + 8 oxidized [2Fe-2S]-[ferredoxin] + 2 NH4(+) + 16 ADP + 16 phosphate + 6 H(+). The key enzymatic reactions in nitrogen fixation are catalyzed by the nitrogenase complex, which has 2 components: the iron protein and the molybdenum-iron protein. The polypeptide is Nitrogenase iron protein (Tolumonas auensis (strain DSM 9187 / NBRC 110442 / TA 4)).